The sequence spans 192 residues: Protein CREG1 (192 aa).

An N-terminal signal peptide occupies residues 1–18 (MVLLAFLCAAALAALARG). Residues Asn-95, Asn-133, and Asn-166 are each glycosylated (N-linked (GlcNAc...) asparagine).

The protein belongs to the CREG family.

The protein resides in the secreted. Functionally, may contribute to the transcriptional control of cell growth and differentiation. This is Protein CREG1 (CREG1) from Gallus gallus (Chicken).